Here is a 362-residue protein sequence, read N- to C-terminus: Peptide chain release factor 2 (362 aa).

Gln-250 is subject to N5-methylglutamine.

The protein belongs to the prokaryotic/mitochondrial release factor family. Methylated by PrmC. Methylation increases the termination efficiency of RF2.

It is found in the cytoplasm. Functionally, peptide chain release factor 2 directs the termination of translation in response to the peptide chain termination codons UGA and UAA. The chain is Peptide chain release factor 2 from Clostridium perfringens (strain ATCC 13124 / DSM 756 / JCM 1290 / NCIMB 6125 / NCTC 8237 / Type A).